Reading from the N-terminus, the 461-residue chain is Coagulation factor IX (461 aa).

The N-terminal stretch at 1 to 28 (MQRVNMIMAESPGLITICLLGYLLSAEC) is a signal peptide. The propeptide occupies 29-46 (TVFLDHENANKILNRPKR). Ca(2+) is bound by residues tyrosine 47, asparagine 48, glutamate 53, glutamate 54, glutamate 61, glutamate 63, glutamate 66, glutamate 67, glutamate 72, glutamate 73, and glutamate 76. One can recognise a Gla domain in the interval 47–92 (YNSGKLEEFVQGNLERECMEEKCSFEEAREVFENTERTTEFWKQYV). Residues glutamate 53, glutamate 54, glutamate 61, glutamate 63, glutamate 66, glutamate 67, glutamate 72, glutamate 73, glutamate 76, glutamate 79, and glutamate 82 each carry the 4-carboxyglutamate modification. Glutamate 61 provides a ligand contact to Mg(2+). Cysteine 64 and cysteine 69 are disulfide-bonded. Glutamate 66 serves as a coordination point for Mg(2+). Mg(2+) is bound at residue glutamate 72. Glutamate 76 contacts Mg(2+). Residue glutamate 82 coordinates Ca(2+). Glutamate 82 provides a ligand contact to Mg(2+). Threonine 85 is a glycosylation site (O-linked (GalNAc...) threonine). Ca(2+) is bound by residues glutamate 86, aspartate 93, glycine 94, and glutamine 96. Residue glutamate 86 is modified to 4-carboxyglutamate. Glutamate 86 is a Mg(2+) binding site. Positions 93 to 129 (DGDQCESNPCLNGGSCKDDINSYECWCPFGFEGKNCE) constitute an EGF-like 1; calcium-binding domain. 10 cysteine pairs are disulfide-bonded: cysteine 97–cysteine 108, cysteine 102–cysteine 117, cysteine 119–cysteine 128, cysteine 134–cysteine 145, cysteine 141–cysteine 155, cysteine 157–cysteine 170, cysteine 178–cysteine 335, cysteine 252–cysteine 268, cysteine 382–cysteine 396, and cysteine 407–cysteine 435. O-linked (Glc...) serine glycosylation occurs at serine 99. Serine 107 carries O-linked (Fuc...) serine glycosylation. Aspartate 110 and aspartate 111 together coordinate Ca(2+). Aspartate 110 carries the (3R)-3-hydroxyaspartate modification. Serine 114 bears the Phosphoserine mark. In terms of domain architecture, EGF-like 2 spans 130 to 171 (LDVTCNIKNGRCEQFCKNSADNKVVCSCTEGYRLAENQKSCE). Residues 192–226 (AETVFPDVDYVNSTEAETILDNITQSTQSFNDFTR) constitute a propeptide, activation peptide. Position 201 is a sulfotyrosine (tyrosine 201). Serine 204 carries the post-translational modification Phosphoserine. A Phosphothreonine; alternate modification is found at threonine 205. Threonine 205 is a glycosylation site (O-linked (GalNAc...) threonine; alternate). Asparagine 213 carries an N-linked (GlcNAc...) asparagine glycan. Threonine 215 and threonine 225 each carry an O-linked (GalNAc...) threonine glycan. The Peptidase S1 domain occupies 227–459 (VVGGEDAKPG…YVNWIKEKTK (233 aa)). Residue histidine 267 is the Charge relay system of the active site. The Ca(2+) site is built by glutamate 281, asparagine 283, glutamate 286, glutamate 288, and glutamate 291. Aspartate 315 serves as the catalytic Charge relay system. Catalysis depends on serine 411, which acts as the Charge relay system.

The protein belongs to the peptidase S1 family. As to quaternary structure, heterodimer of a light chain and a heavy chain; disulfide-linked. Interacts (inactive and activated) with F11 (activated) in calcium-dependent manner. Interacts with SERPINC1. Post-translationally, activated by factor XIa, which excises the activation peptide. The propeptide can also be removed by snake venom protease. The iron and 2-oxoglutarate dependent 3-hydroxylation of aspartate and asparagine is (R) stereospecific within EGF domains. Activated by coagulation factor VIIa-tissue factor (F7-F3) complex in calcium-dependent manner. In terms of processing, predominantly O-glucosylated at Ser-99 by POGLUT1 in vitro.

It is found in the secreted. The enzyme catalyses Selective cleavage of Arg-|-Ile bond in factor X to form factor Xa.. Functionally, factor IX is a vitamin K-dependent plasma protein that participates in the intrinsic pathway of blood coagulation by converting factor X to its active form in the presence of Ca(2+) ions, phospholipids, and factor VIIIa. The chain is Coagulation factor IX (F9) from Pan troglodytes (Chimpanzee).